Here is a 355-residue protein sequence, read N- to C-terminus: uncharacterized protein (355 aa).

132 to 139 (GPPGCGKT) contributes to the ATP binding site.

It belongs to the AAA ATPase family.

The protein localises to the mitochondrion. This is an uncharacterized protein from Schizosaccharomyces pombe (strain 972 / ATCC 24843) (Fission yeast).